Consider the following 877-residue polypeptide: Alanine--tRNA ligase (877 aa).

H562, H566, C664, and H668 together coordinate Zn(2+).

It belongs to the class-II aminoacyl-tRNA synthetase family. Requires Zn(2+) as cofactor.

The protein resides in the cytoplasm. The catalysed reaction is tRNA(Ala) + L-alanine + ATP = L-alanyl-tRNA(Ala) + AMP + diphosphate. In terms of biological role, catalyzes the attachment of alanine to tRNA(Ala) in a two-step reaction: alanine is first activated by ATP to form Ala-AMP and then transferred to the acceptor end of tRNA(Ala). Also edits incorrectly charged Ser-tRNA(Ala) and Gly-tRNA(Ala) via its editing domain. The polypeptide is Alanine--tRNA ligase (Synechocystis sp. (strain ATCC 27184 / PCC 6803 / Kazusa)).